The following is a 278-amino-acid chain: 4-deoxy-L-threo-5-hexosulose-uronate ketol-isomerase (278 aa).

Zn(2+) is bound by residues His196, His198, Glu203, and His245.

The protein belongs to the KduI family. Homohexamer. It depends on Zn(2+) as a cofactor.

It catalyses the reaction 5-dehydro-4-deoxy-D-glucuronate = 3-deoxy-D-glycero-2,5-hexodiulosonate. It functions in the pathway glycan metabolism; pectin degradation; 2-dehydro-3-deoxy-D-gluconate from pectin: step 4/5. Catalyzes the isomerization of 5-dehydro-4-deoxy-D-glucuronate to 3-deoxy-D-glycero-2,5-hexodiulosonate. The sequence is that of 4-deoxy-L-threo-5-hexosulose-uronate ketol-isomerase from Escherichia coli (strain UTI89 / UPEC).